Consider the following 66-residue polypeptide: Large ribosomal subunit protein uL29 (66 aa).

Belongs to the universal ribosomal protein uL29 family.

The chain is Large ribosomal subunit protein uL29 from Helicobacter pylori (strain P12).